We begin with the raw amino-acid sequence, 224 residues long: Steroid receptor RNA activator 1 (224 aa).

Disordered regions lie at residues 1–90 (MAEL…EPTS) and 201–224 (AANE…QQAS). Phosphoserine occurs at positions 48, 57, and 75. The span at 58–76 (PGPPPMGPPPPSSKAPRSP) shows a compositional bias: pro residues. Basic and acidic residues predominate over residues 201 to 215 (AANEEKSAATAEKNH).

This sequence belongs to the SRA1 family. SRA1 RNA exists in a ribonucleoprotein complex containing NCOA1. The RNA also forms a complex with PUS1 and RARG in the nucleus. Interacts with AR. Highly expressed in liver and skeletal muscle and to a lesser extent in brain. Also expressed in both normal and tumorigenic breast epithelial cell lines. Significantly up-regulated in human tumors of the breast, ovary, and uterus.

It is found in the nucleus. The protein resides in the cytoplasm. Functional RNA which acts as a transcriptional coactivator that selectively enhances steroid receptor-mediated transactivation ligand-independently through a mechanism involving the modulating N-terminal domain (AF-1) of steroid receptors. Also mediates transcriptional coactivation of steroid receptors ligand-dependently through the steroid-binding domain (AF-2). Enhances cellular proliferation and differentiation and promotes apoptosis in vivo. May play a role in tumorigenesis. The polypeptide is Steroid receptor RNA activator 1 (Homo sapiens (Human)).